The chain runs to 459 residues: Fibrinogen C domain-containing protein 1 (459 aa).

A disordered region spans residues 1-22 (MVHERWKTVGSASQLEDRPRDK). The Cytoplasmic segment spans residues 1 to 33 (MVHERWKTVGSASQLEDRPRDKPQRASCSYVLC). A helical; Signal-anchor for type II membrane protein transmembrane segment spans residues 34 to 54 (TVLLSLAVLLAVAVTGVVLFL). Residues 55-459 (NHTHTPGTAP…MKIRPVREDR (405 aa)) lie on the Extracellular side of the membrane. The Fibrinogen C-terminal domain maps to 233-456 (CANGSRPRDC…FSEMKIRPVR (224 aa)). C242 and C271 are disulfide-bonded. N338 is a glycosylation site (N-linked (GlcNAc...) asparagine). Ca(2+) is bound by residues D391 and D393. C399 and C412 form a disulfide bridge.

As to quaternary structure, homotetramer; disulfide-linked.

The protein resides in the membrane. In terms of biological role, acetyl group-binding receptor which shows a high-affinity and calcium-dependent binding to acetylated structures such as chitin, some N-acetylated carbohydrates, and amino acids, but not to their non-acetylated counterparts. Can facilitate the endocytosis of acetylated components. In Mus musculus (Mouse), this protein is Fibrinogen C domain-containing protein 1 (Fibcd1).